Here is a 166-residue protein sequence, read N- to C-terminus: KH homology domain-containing protein 1C (166 aa).

The KH; atypical domain maps to 19-78 (PLVFDMEEDKEDYIFGPHDEYLHTLEVHSNTLIQLERWFTPTGQTRVTVVGPLKARLWVM).

This sequence belongs to the KHDC1 family.

The protein is KH homology domain-containing protein 1C (Khdc1c) of Mus musculus (Mouse).